We begin with the raw amino-acid sequence, 308 residues long: Tryptophan 2,3-dioxygenase (308 aa).

Positions Met-1–Thr-37 are disordered. Substrate contacts are provided by residues Phe-77–His-81, Tyr-139, and Arg-143. Heme is bound at residue His-266. Substrate is bound at residue Thr-280.

The protein belongs to the tryptophan 2,3-dioxygenase family. Homotetramer. Heme serves as cofactor.

The enzyme catalyses L-tryptophan + O2 = N-formyl-L-kynurenine. It participates in amino-acid degradation; L-tryptophan degradation via kynurenine pathway; L-kynurenine from L-tryptophan: step 1/2. Its function is as follows. Heme-dependent dioxygenase that catalyzes the oxidative cleavage of the L-tryptophan (L-Trp) pyrrole ring and converts L-tryptophan to N-formyl-L-kynurenine. Catalyzes the oxidative cleavage of the indole moiety. In Burkholderia ambifaria (strain MC40-6), this protein is Tryptophan 2,3-dioxygenase.